Consider the following 36-residue polypeptide: Cytochrome b6-f complex subunit 7 (36 aa).

A helical membrane pass occupies residues 9–29; that stretch reads NGAFIMIGLTLLGLAWGFVII.

Belongs to the PetM family. The 4 large subunits of the cytochrome b6-f complex are cytochrome b6, subunit IV (17 kDa polypeptide, PetD), cytochrome f and the Rieske protein, while the 4 small subunits are PetG, PetL, PetM and PetN. The complex functions as a dimer.

Its subcellular location is the cellular thylakoid membrane. In terms of biological role, component of the cytochrome b6-f complex, which mediates electron transfer between photosystem II (PSII) and photosystem I (PSI), cyclic electron flow around PSI, and state transitions. The chain is Cytochrome b6-f complex subunit 7 from Synechocystis sp. (strain ATCC 27184 / PCC 6803 / Kazusa).